Consider the following 636-residue polypeptide: Eukaryotic peptide chain release factor GTP-binding subunit ERF3A (636 aa).

Composition is skewed to gly residues over residues 1–16 (MDPS…GGGS) and 103–116 (AAGG…GAGG). Disordered stretches follow at residues 1 to 54 (MDPS…AAVA) and 90 to 206 (LRGP…PPGA). A compositionally biased stretch (polar residues) spans 121–138 (VESSQDQSCEGSNSTVSM). Residues 183-193 (STQEMMEEEEE) are compositionally biased toward acidic residues. The tr-type G domain maps to 209–435 (KEHVNVVFIG…DNLPNFNRSV (227 aa)). The tract at residues 218–225 (GHVDAGKS) is G1. GTP is bound at residue 221 to 226 (DAGKST). The tract at residues 274–278 (GKTVE) is G2. The interval 295–298 (DAPG) is G3. Residues 357–360 (NKMD) and 399–401 (SGL) contribute to the GTP site. The tract at residues 357-360 (NKMD) is G4. Residues 399 to 401 (SGL) form a G5 region.

It belongs to the TRAFAC class translation factor GTPase superfamily. Classic translation factor GTPase family. ERF3 subfamily. In terms of assembly, component of the eRF1-eRF3-GTP ternary complex, composed of ETF1/ERF1 and ERF3 (GSPT1/ERF3A or GSPT2/ERF3B) and GTP. Component of the transient SURF (SMG1-UPF1-eRF1-eRF3) complex. The ETF1-GSPT1 complex interacts with JMJD4. Interacts with PABPC1. Interacts with SHFL.

It carries out the reaction GTP + H2O = GDP + phosphate + H(+). GTPase component of the eRF1-eRF3-GTP ternary complex, a ternary complex that mediates translation termination in response to the termination codons UAA, UAG and UGA. GSPT1/ERF3A mediates ETF1/ERF1 delivery to stop codons: The eRF1-eRF3-GTP complex binds to a stop codon in the ribosomal A-site. GTP hydrolysis by GSPT1/ERF3A induces a conformational change that leads to its dissociation, permitting ETF1/ERF1 to accommodate fully in the A-site. Component of the transient SURF complex which recruits UPF1 to stalled ribosomes in the context of nonsense-mediated decay (NMD) of mRNAs containing premature stop codons. Required for SHFL-mediated translation termination which inhibits programmed ribosomal frameshifting (-1PRF) of mRNA from viruses and cellular genes. This chain is Eukaryotic peptide chain release factor GTP-binding subunit ERF3A (Gspt1), found in Mus musculus (Mouse).